We begin with the raw amino-acid sequence, 263 residues long: Insertion sequence IS21-like putative ATP-binding protein (263 aa).

114–121 (GPSGTGKT) serves as a coordination point for ATP.

The protein belongs to the IS21/IS1162 putative ATP-binding protein family.

In Bacteroides fragilis, this protein is Insertion sequence IS21-like putative ATP-binding protein (tnpB).